We begin with the raw amino-acid sequence, 333 residues long: Adenosine deaminase (333 aa).

Residues histidine 12 and histidine 14 each contribute to the Zn(2+) site. The substrate site is built by histidine 14, aspartate 16, and glycine 170. Histidine 197 lines the Zn(2+) pocket. Glutamate 200 serves as the catalytic Proton donor. Aspartate 278 contributes to the Zn(2+) binding site. Aspartate 279 serves as a coordination point for substrate.

This sequence belongs to the metallo-dependent hydrolases superfamily. Adenosine and AMP deaminases family. Adenosine deaminase subfamily. It depends on Zn(2+) as a cofactor.

It carries out the reaction adenosine + H2O + H(+) = inosine + NH4(+). The enzyme catalyses 2'-deoxyadenosine + H2O + H(+) = 2'-deoxyinosine + NH4(+). Its function is as follows. Catalyzes the hydrolytic deamination of adenosine and 2-deoxyadenosine. The sequence is that of Adenosine deaminase from Salmonella enteritidis PT4 (strain P125109).